Consider the following 488-residue polypeptide: 3-octaprenyl-4-hydroxybenzoate carboxy-lyase (488 aa).

Asn-172 contributes to the Mn(2+) binding site. Residues 175 to 177, 189 to 191, and 194 to 195 each bind prenylated FMN; these read IYR, RWL, and RG. Mn(2+) is bound at residue Glu-238. Residue Asp-287 is the Proton donor of the active site.

It belongs to the UbiD family. In terms of assembly, homohexamer. It depends on prenylated FMN as a cofactor. Requires Mn(2+) as cofactor.

It is found in the cell membrane. The enzyme catalyses a 4-hydroxy-3-(all-trans-polyprenyl)benzoate + H(+) = a 2-(all-trans-polyprenyl)phenol + CO2. The protein operates within cofactor biosynthesis; ubiquinone biosynthesis. Functionally, catalyzes the decarboxylation of 3-octaprenyl-4-hydroxy benzoate to 2-octaprenylphenol, an intermediate step in ubiquinone biosynthesis. The polypeptide is 3-octaprenyl-4-hydroxybenzoate carboxy-lyase (Legionella pneumophila (strain Paris)).